A 1331-amino-acid chain; its full sequence is Contactin-associated protein-like 2 (1331 aa).

A signal peptide spans 1–27; that stretch reads MLAAPRAGCGAALLLWIVSSCLCRAWT. At 28-1262 the chain is on the extracellular side; the sequence is APSTSQKCDE…IRNGVNRNSA (1235 aa). One can recognise an F5/8 type C domain in the interval 35 to 181; sequence CDEPLVSGLP…IGLRIEVYGC (147 aa). Cysteines 35 and 181 form a disulfide. Laminin G-like domains lie at 187 to 368 and 373 to 552; these read VINF…SFSC and TVPV…IDMC. N-linked (GlcNAc...) asparagine glycosylation is found at Asn289, Asn346, Asn363, Asn379, Asn436, Asn506, Asn507, and Asn546. Cys336 and Cys368 are oxidised to a cystine. 4 disulfides stabilise this stretch: Cys520–Cys552, Cys558–Cys569, Cys563–Cys578, and Cys580–Cys590. One can recognise an EGF-like 1 domain in the interval 554 to 591; sequence IIDRCVPNHCERGGKCSQTWDSFKCTCDETGYTGATCH. Residues 592-798 form the Fibrinogen C-terminal domain; the sequence is NSIYEPSCEA…LRCQGDRNYW (207 aa). N-linked (GlcNAc...) asparagine glycosylation is found at Asn630 and Asn735. Residues 799–963 enclose the Laminin G-like 3 domain; the sequence is NAASFPNPSS…KVTSGFISGC (165 aa). Intrachain disulfides connect Cys936–Cys963, Cys967–Cys980, Cys974–Cys989, and Cys991–Cys1001. An EGF-like 2 domain is found at 964–1002; sequence SGHCTSYGTNCENGGKCLERYHGYSCDCSNTAYDGTFCN. A Laminin G-like 4 domain is found at 1023-1214; that stretch reads ATNARDSSSR…IQGELVESNC (192 aa). N-linked (GlcNAc...) asparagine glycosylation is found at Asn1116 and Asn1198. A disulfide bond links Cys1178 and Cys1214. The chain crosses the membrane as a helical span at residues 1263 to 1283; that stretch reads IIGGVIAVVIFTILCTLVFLI. Over 1284-1331 the chain is Cytoplasmic; the sequence is RYMFRHKGTYHTNEAKGAESAESADAAIMNNDPNFTETIDESKKEWLI. Ser1303 and Ser1306 each carry phosphoserine.

Belongs to the neurexin family. Interacts (via C-terminus) with KCNA2.

The protein localises to the membrane. It is found in the cell projection. The protein resides in the axon. It localises to the cell junction. Its subcellular location is the paranodal septate junction. Functionally, required for gap junction formation. Required, with CNTNAP1, for radial and longitudinal organization of myelinated axons. Plays a role in the formation of functional distinct domains critical for saltatory conduction of nerve impulses in myelinated nerve fibers. Demarcates the juxtaparanodal region of the axo-glial junction. In Pongo abelii (Sumatran orangutan), this protein is Contactin-associated protein-like 2 (CNTNAP2).